Reading from the N-terminus, the 180-residue chain is Ribulose bisphosphate carboxylase small subunit, chloroplastic 5 (180 aa).

Residues 1 to 56 constitute a chloroplast transit peptide; the sequence is MASSVMSSAAVATRGNGAQASMVAPFTGLKSTASFPVSRKQNLDITSIASNGGRVR.

It belongs to the RuBisCO small chain family. Heterohexadecamer of 8 large and 8 small subunits.

It is found in the plastid. It localises to the chloroplast. RuBisCO catalyzes two reactions: the carboxylation of D-ribulose 1,5-bisphosphate, the primary event in carbon dioxide fixation, as well as the oxidative fragmentation of the pentose substrate. Both reactions occur simultaneously and in competition at the same active site. Although the small subunit is not catalytic it is essential for maximal activity. The protein is Ribulose bisphosphate carboxylase small subunit, chloroplastic 5 of Solanum tuberosum (Potato).